The sequence spans 103 residues: Protamine-3 (103 aa).

Residues 1 to 103 (MGSRCAKLNT…QSPEPKRTPS (103 aa)) form a disordered region. The segment covering 10–21 (TGQSPGHSPGHS) has biased composition (low complexity). Acidic residues predominate over residues 50 to 66 (GEEEEEEEEEGEEEEKE). Residues 78–90 (EPERQEEGHKDNA) show a composition bias toward basic and acidic residues. Residue Ser-95 is modified to Phosphoserine.

Belongs to the protamine P3 family.

Its subcellular location is the nucleus. It is found in the chromosome. Its function is as follows. Protamines substitute for histones in the chromatin of sperm during the haploid phase of spermatogenesis. They compact sperm DNA into a highly condensed, stable and inactive complex. In Homo sapiens (Human), this protein is Protamine-3 (PRM3).